The sequence spans 241 residues: Attacin-C (241 aa).

A signal peptide spans 1 to 21 (MSKIVLLIVVIVGVLGSLAVA). A propeptide spanning residues 22–23 (LP) is cleaved from the precursor. Gln-24 carries the post-translational modification Pyrrolidone carboxylic acid. O-linked (GalNAc...) threonine glycosylation is present at Thr-39. Residue Ser-127 is modified to Phosphoserine.

It belongs to the attacin/sarcotoxin-2 family. Hemolymph (at protein level).

It localises to the secreted. Functionally, has antimicrobial activity in synergy with other peptides. Strongest activity observed against E.cloacae. The chain is Attacin-C from Drosophila melanogaster (Fruit fly).